Here is a 300-residue protein sequence, read N- to C-terminus: Acetylglutamate kinase (300 aa).

Substrate is bound by residues 72-73 (GG), arginine 94, and asparagine 197.

Belongs to the acetylglutamate kinase family. ArgB subfamily.

The protein localises to the cytoplasm. It carries out the reaction N-acetyl-L-glutamate + ATP = N-acetyl-L-glutamyl 5-phosphate + ADP. It participates in amino-acid biosynthesis; L-arginine biosynthesis; N(2)-acetyl-L-ornithine from L-glutamate: step 2/4. In terms of biological role, catalyzes the ATP-dependent phosphorylation of N-acetyl-L-glutamate. In Aromatoleum aromaticum (strain DSM 19018 / LMG 30748 / EbN1) (Azoarcus sp. (strain EbN1)), this protein is Acetylglutamate kinase.